The primary structure comprises 347 residues: Probable dual-specificity RNA methyltransferase RlmN (347 aa).

The active-site Proton acceptor is Glu91. The Radical SAM core domain occupies 97–327 (YKYGNSICVS…ATVRREMGSD (231 aa)). Cys104 and Cys332 are joined by a disulfide. The [4Fe-4S] cluster site is built by Cys111, Cys115, and Cys118. S-adenosyl-L-methionine is bound by residues 158-159 (GE), Ser190, 213-215 (SLH), and Asn289. Catalysis depends on Cys332, which acts as the S-methylcysteine intermediate.

Belongs to the radical SAM superfamily. RlmN family. Requires [4Fe-4S] cluster as cofactor.

It is found in the cytoplasm. The enzyme catalyses adenosine(2503) in 23S rRNA + 2 reduced [2Fe-2S]-[ferredoxin] + 2 S-adenosyl-L-methionine = 2-methyladenosine(2503) in 23S rRNA + 5'-deoxyadenosine + L-methionine + 2 oxidized [2Fe-2S]-[ferredoxin] + S-adenosyl-L-homocysteine. It catalyses the reaction adenosine(37) in tRNA + 2 reduced [2Fe-2S]-[ferredoxin] + 2 S-adenosyl-L-methionine = 2-methyladenosine(37) in tRNA + 5'-deoxyadenosine + L-methionine + 2 oxidized [2Fe-2S]-[ferredoxin] + S-adenosyl-L-homocysteine. Specifically methylates position 2 of adenine 2503 in 23S rRNA and position 2 of adenine 37 in tRNAs. The polypeptide is Probable dual-specificity RNA methyltransferase RlmN (Clostridium perfringens (strain SM101 / Type A)).